A 313-amino-acid polypeptide reads, in one-letter code: Ribosomal RNA small subunit methyltransferase H (313 aa).

S-adenosyl-L-methionine contacts are provided by residues 33–35 (AGH), Asp53, Phe82, Asp103, and Gln110.

The protein belongs to the methyltransferase superfamily. RsmH family.

The protein localises to the cytoplasm. The enzyme catalyses cytidine(1402) in 16S rRNA + S-adenosyl-L-methionine = N(4)-methylcytidine(1402) in 16S rRNA + S-adenosyl-L-homocysteine + H(+). In terms of biological role, specifically methylates the N4 position of cytidine in position 1402 (C1402) of 16S rRNA. This is Ribosomal RNA small subunit methyltransferase H from Ruminiclostridium cellulolyticum (strain ATCC 35319 / DSM 5812 / JCM 6584 / H10) (Clostridium cellulolyticum).